Here is a 93-residue protein sequence, read N- to C-terminus: Ferredoxin-2 (93 aa).

The 2Fe-2S ferredoxin-type domain occupies 2–91 (YKVTLKTPDG…DVVIETHKED (90 aa)). Residues Cys37, Cys42, Cys45, and Cys75 each coordinate [2Fe-2S] cluster.

Belongs to the 2Fe2S plant-type ferredoxin family. The cofactor is [2Fe-2S] cluster.

The protein localises to the plastid. The protein resides in the chloroplast. Ferredoxins are iron-sulfur proteins that transfer electrons in a wide variety of metabolic reactions. The sequence is that of Ferredoxin-2 from Equisetum arvense (Field horsetail).